The following is a 113-amino-acid chain: UPF0482 protein YnfB (113 aa).

The signal sequence occupies residues 1-28 (MNNTLSKRLCLTAMLTLAAVVYTTSAFA).

It belongs to the UPF0482 family.

This chain is UPF0482 protein YnfB, found in Salmonella agona (strain SL483).